The sequence spans 1019 residues: Insulin-degrading enzyme (1019 aa).

His-108 serves as a coordination point for Zn(2+). Glu-111 functions as the Proton acceptor in the catalytic mechanism. Residues His-112 and Glu-189 each coordinate Zn(2+). Lys-192 carries the post-translational modification N6-succinyllysine. Residues 336–342 (HLIGHEG) and 359–363 (LVGGQ) contribute to the substrate site. Arg-429 contacts ATP. Lys-697 carries the N6-succinyllysine modification. Residues 853–858 (EKPPHY) carry the SlyX motif motif. ATP is bound at residue 895-901 (DKPKKLS).

This sequence belongs to the peptidase M16 family. In terms of assembly, homodimer. Can also form homotetramers. (Microbial infection) Interacts (via N-terminus) with varicella-zoster virus (VZV) envelope glycoprotein E (via N-terminus); the membrane-associated isoform may function as an entry receptor for this virus. The cofactor is Zn(2+). The N-terminus is blocked. As to expression, detected in brain and in cerebrospinal fluid (at protein level).

The protein resides in the cytoplasm. It is found in the cytosol. Its subcellular location is the cell membrane. It localises to the secreted. The catalysed reaction is Degradation of insulin, glucagon and other polypeptides. No action on proteins.. Activated by small peptides. Activated by ATP and GTP, and to a lesser extent by CTP, TTP and PPPi. Inhibited by bacitracin. In vitro modification of Cys residues impairs enzyme activity. Its function is as follows. Plays a role in the cellular breakdown of insulin, APP peptides, IAPP peptides, natriuretic peptides, glucagon, bradykinin, kallidin, and other peptides, and thereby plays a role in intercellular peptide signaling. Substrate binding induces important conformation changes, making it possible to bind and degrade larger substrates, such as insulin. Contributes to the regulation of peptide hormone signaling cascades and regulation of blood glucose homeostasis via its role in the degradation of insulin, glucagon and IAPP. Plays a role in the degradation and clearance of APP-derived amyloidogenic peptides that are secreted by neurons and microglia. Degrades the natriuretic peptides ANP, BNP and CNP, inactivating their ability to raise intracellular cGMP. Also degrades an aberrant frameshifted 40-residue form of NPPA (fsNPPA) which is associated with familial atrial fibrillation in heterozygous patients. Involved in antigen processing. Produces both the N terminus and the C terminus of MAGEA3-derived antigenic peptide (EVDPIGHLY) that is presented to cytotoxic T lymphocytes by MHC class I. In terms of biological role, (Microbial infection) The membrane-associated isoform acts as an entry receptor for varicella-zoster virus (VZV). This chain is Insulin-degrading enzyme, found in Homo sapiens (Human).